The primary structure comprises 618 residues: Sodium-coupled monocarboxylate transporter 2 (618 aa).

Over 1–9 (MEVKNFAVW) the chain is Extracellular. A helical transmembrane segment spans residues 10-30 (DYVVFAALFFISSGIGVFFAI). Over 31–47 (KERKKATSREFLVGGRQ) the chain is Cytoplasmic. A helical membrane pass occupies residues 48 to 68 (MSFGPVGLSLTASFMSAVTVL). At 69 to 82 (GTPSEVYRFGASFL) the chain is on the extracellular side. A helical membrane pass occupies residues 83-103 (VFFIAYLFVILLTSELFLPVF). Residues 104–128 (YRSGITSTYEYLQLRFNKPVRYAAT) lie on the Cytoplasmic side of the membrane. A helical transmembrane segment spans residues 129 to 149 (VIYIVQTILYTGVVVYAPALA). At 150-157 (LNQVTGFD) the chain is on the extracellular side. The chain crosses the membrane as a helical span at residues 158-178 (LWGSVFATGIVCTFYCTLGGL). Over 179 to 180 (KA) the chain is Cytoplasmic. The helical transmembrane segment at 181–201 (VVWTDAFQMVVMIVGFLTVLI) threads the bilayer. The Extracellular portion of the chain corresponds to 202-235 (QGSTHAGGFHNVLEQSTNGSRLHIFDFDVDPLRR). The helical transmembrane segment at 236–256 (HTFWTITVGGTFTWLGIYGVN) threads the bilayer. Residues 257-275 (QSTIQRCISCKTEKHAKLA) lie on the Cytoplasmic side of the membrane. A helical membrane pass occupies residues 276 to 296 (LYFNLLGLWIILVCAVFSGLI). Residues 297–321 (MYSHFKDCDPWTSGIISAPDQLMPY) are Extracellular-facing. A helical transmembrane segment spans residues 322 to 342 (FVMEIFATMPGLPGLFVACAF). Residues 343–385 (SGTLSTVASSINALATVTFEDFVKSCFPHLSDKLSTWISKGLC) lie on the Cytoplasmic side of the membrane. Residues 386 to 406 (LLFGVMCTSMAVAASVMGGVV) traverse the membrane as a helical segment. Over 407–411 (QASLS) the chain is Extracellular. Residues 412–432 (IHGMCGGPMLGLFSLGIVFPF) traverse the membrane as a helical segment. Over 433–437 (VNWKG) the chain is Cytoplasmic. A helical transmembrane segment spans residues 438–458 (ALGGLLTGITLSFWVAIGAFI). The Extracellular portion of the chain corresponds to 459–504 (YPAPASKTWPLPLSTDQCIKSNVTATGPPVLSSRPGIADTWYSISY). N-linked (GlcNAc...) asparagine glycosylation occurs at Asn-480. The chain crosses the membrane as a helical span at residues 505–525 (LYYSAVGCLGCIVAGVIISLI). The Cytoplasmic segment spans residues 526 to 618 (TGRQRGEDIQ…NNMAFETTHF (93 aa)).

The protein belongs to the sodium:solute symporter (SSF) (TC 2.A.21) family.

It localises to the apical cell membrane. The enzyme catalyses (S)-lactate(out) + Na(+)(out) = (S)-lactate(in) + Na(+)(in). It carries out the reaction nicotinate(out) + Na(+)(out) = nicotinate(in) + Na(+)(in). The catalysed reaction is pyruvate(out) + Na(+)(out) = pyruvate(in) + Na(+)(in). It catalyses the reaction propanoate(out) + Na(+)(out) = propanoate(in) + Na(+)(in). The enzyme catalyses butanoate(out) + Na(+)(out) = butanoate(in) + Na(+)(in). It carries out the reaction acetoacetate(out) + Na(+)(out) = acetoacetate(in) + Na(+)(in). With respect to regulation, cotransport of monocarboxylates and nicotinate strongly inhibited by ibuprofen, fenoprofen and ketoprofen. Acts as an electroneutral and low-affinity sodium (Na(+))-dependent sodium-coupled solute transporter. Catalyzes the transport across the plasma membrane of many monocarboxylates such as lactate, pyruvate, nicotinate, propionate, butyrate and beta-D-hydroxybutyrate. May be responsible for the first step of reabsorption of monocarboxylates from the lumen of the proximal tubule of the kidney and the small intestine. May play also a role in monocarboxylates transport in the retina. This chain is Sodium-coupled monocarboxylate transporter 2, found in Homo sapiens (Human).